The primary structure comprises 417 residues: MSSKYPRSVRRCLPLCALTLEAALILLFYFFTQYDASLEDQKGLVASYQVGQDLTVMAAIGFGFLTSSFRRHSWSSVAFSLFMLALGVQWAILLDGFLSQFPPGKVVITLFSIRLATTSALSVLISVDAVLGKVNLVQLVVMVLVEVTALGTVRMVISNIFNTDYHMNLMHIYVFAAYFGLSVAWCLPKPLPKGTEDKDQIATIPSLSAMLGALFLWMFWPSFNSALLRSPIERKNAVFNTYYAVAVSVVTAISGSSLAHPQGKISMSYMHNAVLAGGVAVGTSCHLIPSPWLAMVLGLVAGLISVGGAKYLPGCCNRVLGIPHSSVMGSNFSWLGLLGEIIYIVLVVRHTIWNGNGMIGFQVLLRIGEFSLATTIALTSGLLTGLLLNLKIWKAPHEAKYFDDQVFWKFPHLAVGF.

11 consecutive transmembrane segments (helical) span residues 12–32 (CLPL…YFFT), 44–64 (LVAS…GFGF), 77–97 (VAFS…LDGF), 125–145 (ISVD…MVLV), 172–192 (IYVF…KPLP), 203–223 (TIPS…WPSF), 238–258 (VFNT…GSSL), 265–285 (ISMS…GTSC), 287–307 (LIPS…ISVG), 331–351 (NFSW…VRHT), and 358–378 (MIGF…TIAL).

This sequence belongs to the ammonium transporter (TC 2.A.49) family. Rh subfamily.

The protein localises to the membrane. In terms of biological role, may be part of an oligomeric complex which is likely to have a transport or channel function in the erythrocyte membrane. The polypeptide is RH-like protein IIR (Pan troglodytes (Chimpanzee)).